The chain runs to 470 residues: Cytochrome P450 monooxygenase FUM2 (470 aa).

A heme-binding site is contributed by cysteine 414.

The protein belongs to the cytochrome P450 family. It depends on heme as a cofactor.

Its pathway is mycotoxin biosynthesis. Its function is as follows. Cytochrome P450 monooxygenase; part of the gene cluster that mediates the biosynthesis of fumonisins B1 (FB1), B2 (FB2), B3 (FB3), and B4 (FB4), which are carcinogenic mycotoxins. Within the pathway, FUM2 performs the C-10 hydroxylation present in FB2 and FB4 and which occurs early in the biosynthesis. The biosynthesis starts with the FUM1-catalyzed carbon chain assembly from one molecule of acetyl-CoA, eight molecules of malonyl-CoA, and two molecules of methionine (in S-adenosyl form). The C18 polyketide chain is released from the enzyme by a nucleophilic attack of a carbanion, which is derived from R-carbon of alanine by decarboxylation, on the carbonyl carbon of polyketide acyl chain. This step is catalyzed by the pyridoxal 5'-phosphate-dependent aminoacyl transferase FUM8. The resultant 3-keto intermediate is then stereospecifically reduced to a 3-hydroxyl product by reductase FUM13. Subsequent oxidations at C-10 by the cytochrome P450 monooxygenase FUM2, C-14 and C-15 by FUM6, FUM12 or FUM15, tricarballylic esterification of the hydroxyl groups on C-14 and C-15 by acyltransferase FUM14, and C-5 hydroxylation by 2-keto-glutarate-dependent dioxygenase FUM3 furnish the biosynthesis of fumonisins. The tricarballylic moieties are most likely derived from the citric acid cycle, and their addition to the carbon backbone may involve FUM7, FUM10, FUM11 and FUM14. The sequence is that of Cytochrome P450 monooxygenase FUM2 from Gibberella moniliformis (strain M3125 / FGSC 7600) (Maize ear and stalk rot fungus).